The sequence spans 1744 residues: Complement C4-B (1744 aa).

Residues 1-19 (MRLLWGLIWASSFFTLSLQ) form the signal peptide. C68 and C97 form a disulfide bridge. A glycan (N-linked (GlcNAc...) asparagine) is linked at N226. A disulfide bridge connects residues C635 and C669. Positions 676 to 679 (RKKR) are excised as a propeptide. Disulfide bonds link C702–C728, C703–C735, and C716–C736. An Anaphylatoxin-like domain is found at 702–736 (CCQDGVTRLPMMRSCEQRAARVQQPDCREPFLSCC). N-linked (GlcNAc...) asparagine glycosylation occurs at N862. S918 carries the post-translational modification Phosphoserine. The segment at residues 1010-1013 (CGEQ) is a cross-link (isoglutamyl cysteine thioester (Cys-Gln)). N-linked (GlcNAc...) asparagine glycans are attached at residues N1328 and N1391. A sulfotyrosine mark is found at Y1417, Y1420, and Y1422. Positions 1447–1453 (RRNRRRR) are excised as a propeptide. 5 disulfide bridges follow: C1471-C1535, C1583-C1588, C1595-C1673, C1618-C1742, and C1718-C1727. The NTR domain occupies 1595–1742 (CPRQRRALER…FLQEYGTQGC (148 aa)).

In absence of complement activation, circulates in blood as a disulfide-linked trimer of an alpha, beta and gamma chain. As to quaternary structure, complement C4b is composed of complement C4b-A, complement C4 beta and complement C4 gamma chains that are associated via disulfide bonds. Non-enzymatic component of the C3 convertase, also named C4bC2b, composed of the serine protease complement C2b (C2), as well as complement C4b. Non-enzymatic component of the C5 convertase, also named C4bC2bC3b, composed of the serine protease complement C2b (C2), complement C3b, as well as complement C4b. Interacts with CR1 (via Sushi 1 and Sushi 2 domains). In terms of assembly, (Microbial infection) Binds B.burgdorferi OspC, the interaction is inhibited by complement factor C2. This binding may inhibit the complement cascade and allow the bacteria to survive in the host bloodstream. In terms of processing, prior to secretion, the single-chain precursor is enzymatically cleaved by plasminogen (PLG) to yield non-identical chains alpha, beta and gamma. During activation of the complement systems, the alpha chain is cleaved into C4a and C4b by different proteases depending on the complement pathway: C4b stays linked to the beta and gamma chains, while C4a is released in the plasma. The alpha chain is cleaved by C1S to generate C4a and C4b following activation by the classical complement system. The alpha chain is cleaved to generate C4a and C4b by MASP2 following activation by the lectin complement system. The alpha chain is cleaved by GZMK to generate C4a and C4b following activation by the GZMK complement system. Further degradation of C4b by C1 into the inactive fragments C4c and C4d blocks the generation of C3 convertase. The proteolytic cleavages often are incomplete so that many structural forms can be found in plasma. Upon activation, the internal thioester bond reacts with carbohydrate antigens on the target surface to form amide or ester bonds, leading to covalent association with the surface of pathogens. Post-translationally, complement C4b interacts with complement C3b via a thioester linkage. In terms of processing, N- and O-glycosylated. O-glycosylated with a core 1 or possibly core 8 glycan. Complement component C4 is expressed at highest levels in the liver, at moderate levels in the adrenal cortex, adrenal medulla, thyroid gland, and the kidney, and at lowest levels in the heart, ovary, small intestine, thymus, pancreas and spleen. The extra-hepatic sites of expression may be important for the local protection and inflammatory response.

The protein localises to the secreted. It is found in the synapse. It localises to the cell projection. Its subcellular location is the axon. The protein resides in the dendrite. The protein localises to the cell surface. Functionally, precursor of non-enzymatic components of the classical, lectin and GZMK complement pathways, which consist in a cascade of proteins that leads to phagocytosis and breakdown of pathogens and signaling that strengthens the adaptive immune system. Non-enzymatic component of C3 and C5 convertases. Generated following cleavage by complement proteases (C1S, MASP2 or GZMK, depending on the complement pathway), it covalently attaches to the surface of pathogens, where it acts as an opsonin that marks the surface of antigens for removal. It then recruits the serine protease complement C2b to form the C3 and C5 convertases, which cleave and activate C3 and C5, respectively, the next components of the complement pathways. Complement C4b-B isotype catalyzes the transacylation of the thioester carbonyl group to form ester bonds with carbohydrate antigens, while C4b-A isotype is responsible for effective binding to form amide bonds with immune aggregates or protein antigens. In terms of biological role, putative humoral mediator released following cleavage by complement proteases (C1S, MASP2 or GZMK, depending on the complement pathway). While it is strongly similar to anaphylatoxins, its role is unclear. Was reported to act as a mediator of local inflammatory process; however these effects were probably due to contamination with C3a and/C5a anaphylatoxins in biological assays. In Homo sapiens (Human), this protein is Complement C4-B.